The following is a 416-amino-acid chain: Phosphoglycerate kinase (416 aa).

The (2R)-3-phosphoglycerate site is built by Val22, Asp23, Phe24, Asn25, Gln37, Arg38, Ser61, His62, Gly64, Arg65, Leu120, Arg121, His168, and Arg169. An ADP-binding site is contributed by Gly212. Residue Gly212 coordinates CDP. AMP contacts are provided by Ala213 and Lys214. Residue Ala213 coordinates ATP. Ala213 is a Mg(2+) binding site. Residue Asp217 participates in CDP binding. Mg(2+) is bound at residue Asp217. An AMP-binding site is contributed by Lys218. Lys218 serves as a coordination point for ATP. Gly236 is an ADP binding site. Residue Gly236 coordinates CDP. AMP is bound by residues Gly237 and Gly311. 2 residues coordinate ATP: Gly237 and Gly311. Residues Gly336 and Phe341 each contribute to the CDP site. Phe341 provides a ligand contact to ADP. Glu342 lines the AMP pocket. Glu342, Asp373, and Thr374 together coordinate ATP. Residue Asp373 coordinates Mg(2+).

Belongs to the phosphoglycerate kinase family. In terms of assembly, monomer. Mg(2+) is required as a cofactor. Expressed in all cells of the worm (at protein level), higher expression in the cells associated with the tubercles (tegumental modifications), the muscle and along the tegument.

It catalyses the reaction (2R)-3-phosphoglycerate + ATP = (2R)-3-phospho-glyceroyl phosphate + ADP. Its pathway is carbohydrate degradation; glycolysis; pyruvate from D-glyceraldehyde 3-phosphate: step 2/5. Involved in the seventh step in glycolysis. Catalyzes the conversion of 1,3-bisphosphoglycerate ((2R)-3-phospho-glyceroyl phosphate) to 3-phosphoglycerate ((2R)-3-phosphoglycerate) and results in the formation of ATP. Associated with the tegument to provide the energy needed for the tegumental repair resulting from immune damage. The chain is Phosphoglycerate kinase (PGK) from Schistosoma mansoni (Blood fluke).